The chain runs to 197 residues: Holliday junction branch migration complex subunit RuvA (197 aa).

A domain I region spans residues 1–64 (MIASIRGILI…EDSLTLYGFE (64 aa)). Residues 65–145 (TVEQRQLFET…GLPTGAAVTP (81 aa)) are domain II. The tract at residues 146-148 (AVA) is flexible linker. Residues 148–197 (AAANAELSEALISLGFTDAEAAAAIAALPSDAPPDLEERVRLALRYFSAS) are domain III.

It belongs to the RuvA family. As to quaternary structure, homotetramer. Forms an RuvA(8)-RuvB(12)-Holliday junction (HJ) complex. HJ DNA is sandwiched between 2 RuvA tetramers; dsDNA enters through RuvA and exits via RuvB. An RuvB hexamer assembles on each DNA strand where it exits the tetramer. Each RuvB hexamer is contacted by two RuvA subunits (via domain III) on 2 adjacent RuvB subunits; this complex drives branch migration. In the full resolvosome a probable DNA-RuvA(4)-RuvB(12)-RuvC(2) complex forms which resolves the HJ.

Its subcellular location is the cytoplasm. In terms of biological role, the RuvA-RuvB-RuvC complex processes Holliday junction (HJ) DNA during genetic recombination and DNA repair, while the RuvA-RuvB complex plays an important role in the rescue of blocked DNA replication forks via replication fork reversal (RFR). RuvA specifically binds to HJ cruciform DNA, conferring on it an open structure. The RuvB hexamer acts as an ATP-dependent pump, pulling dsDNA into and through the RuvAB complex. HJ branch migration allows RuvC to scan DNA until it finds its consensus sequence, where it cleaves and resolves the cruciform DNA. The protein is Holliday junction branch migration complex subunit RuvA of Roseiflexus sp. (strain RS-1).